Here is a 41-residue protein sequence, read N- to C-terminus: Photosystem I reaction center subunit IX (41 aa).

The helical transmembrane segment at 7 to 27 threads the bilayer; the sequence is YLSTAPVVAFAWLTFTAGFII.

The protein belongs to the PsaJ family.

The protein localises to the plastid. Its subcellular location is the chloroplast thylakoid membrane. In terms of biological role, may help in the organization of the PsaE and PsaF subunits. The polypeptide is Photosystem I reaction center subunit IX (Stigeoclonium helveticum (Green alga)).